We begin with the raw amino-acid sequence, 339 residues long: Ketol-acid reductoisomerase (NADP(+)) (339 aa).

The 182-residue stretch at 1–182 (MRVYYDRDAD…GGGRAGIIET (182 aa)) folds into the KARI N-terminal Rossmann domain. NADP(+) is bound by residues 24 to 27 (YGSQ), arginine 48, serine 51, serine 53, and 83 to 86 (DELQ). Histidine 108 is an active-site residue. Residue glycine 134 coordinates NADP(+). The region spanning 183–328 (TFREECETDL…ARLRDMMPWI (146 aa)) is the KARI C-terminal knotted domain. Mg(2+) is bound by residues aspartate 191, glutamate 195, glutamate 227, and glutamate 231. Residue serine 252 coordinates substrate.

Belongs to the ketol-acid reductoisomerase family. Mg(2+) is required as a cofactor.

It catalyses the reaction (2R)-2,3-dihydroxy-3-methylbutanoate + NADP(+) = (2S)-2-acetolactate + NADPH + H(+). It carries out the reaction (2R,3R)-2,3-dihydroxy-3-methylpentanoate + NADP(+) = (S)-2-ethyl-2-hydroxy-3-oxobutanoate + NADPH + H(+). The protein operates within amino-acid biosynthesis; L-isoleucine biosynthesis; L-isoleucine from 2-oxobutanoate: step 2/4. Its pathway is amino-acid biosynthesis; L-valine biosynthesis; L-valine from pyruvate: step 2/4. Its function is as follows. Involved in the biosynthesis of branched-chain amino acids (BCAA). Catalyzes an alkyl-migration followed by a ketol-acid reduction of (S)-2-acetolactate (S2AL) to yield (R)-2,3-dihydroxy-isovalerate. In the isomerase reaction, S2AL is rearranged via a Mg-dependent methyl migration to produce 3-hydroxy-3-methyl-2-ketobutyrate (HMKB). In the reductase reaction, this 2-ketoacid undergoes a metal-dependent reduction by NADPH to yield (R)-2,3-dihydroxy-isovalerate. This is Ketol-acid reductoisomerase (NADP(+)) from Nitrobacter winogradskyi (strain ATCC 25391 / DSM 10237 / CIP 104748 / NCIMB 11846 / Nb-255).